The sequence spans 228 residues: Probable ribosomal RNA small subunit methyltransferase A (228 aa).

S-adenosyl-L-methionine contacts are provided by histidine 9, leucine 11, glycine 34, glutamate 55, aspartate 78, and asparagine 93.

It belongs to the class I-like SAM-binding methyltransferase superfamily. rRNA adenine N(6)-methyltransferase family. RsmA subfamily.

It localises to the cytoplasm. Functionally, specifically dimethylates two adjacent adenosines in the loop of a conserved hairpin near the 3'-end of 16S rRNA in the 30S particle. May play a critical role in biogenesis of 30S subunits. The protein is Probable ribosomal RNA small subunit methyltransferase A of Pyrobaculum aerophilum (strain ATCC 51768 / DSM 7523 / JCM 9630 / CIP 104966 / NBRC 100827 / IM2).